A 400-amino-acid chain; its full sequence is Formate-dependent phosphoribosylglycinamide formyltransferase (400 aa).

Residues 22 to 23 (EL) and Glu82 contribute to the N(1)-(5-phospho-beta-D-ribosyl)glycinamide site. Residues Arg115, Lys156, 161 to 166 (SSGKGQ), 196 to 199 (EGFI), and Glu204 each bind ATP. One can recognise an ATP-grasp domain in the interval 120–309 (RLAAETLGLP…EFALHARAIL (190 aa)). 2 residues coordinate Mg(2+): Glu268 and Glu280. Residues Asp287, Lys361, and 368–369 (RR) contribute to the N(1)-(5-phospho-beta-D-ribosyl)glycinamide site.

Belongs to the PurK/PurT family. In terms of assembly, homodimer.

It carries out the reaction N(1)-(5-phospho-beta-D-ribosyl)glycinamide + formate + ATP = N(2)-formyl-N(1)-(5-phospho-beta-D-ribosyl)glycinamide + ADP + phosphate + H(+). It participates in purine metabolism; IMP biosynthesis via de novo pathway; N(2)-formyl-N(1)-(5-phospho-D-ribosyl)glycinamide from N(1)-(5-phospho-D-ribosyl)glycinamide (formate route): step 1/1. Functionally, involved in the de novo purine biosynthesis. Catalyzes the transfer of formate to 5-phospho-ribosyl-glycinamide (GAR), producing 5-phospho-ribosyl-N-formylglycinamide (FGAR). Formate is provided by PurU via hydrolysis of 10-formyl-tetrahydrofolate. This is Formate-dependent phosphoribosylglycinamide formyltransferase from Xanthomonas campestris pv. campestris (strain 8004).